A 335-amino-acid polypeptide reads, in one-letter code: Holliday junction branch migration complex subunit RuvB (335 aa).

Positions M1–Y181 are large ATPase domain (RuvB-L). Residues L20, R21, G62, K65, T66, T67, E128 to F130, R171, Y181, and R218 contribute to the ATP site. Residue T66 coordinates Mg(2+). The interval N182–G252 is small ATPAse domain (RuvB-S). Positions D255–F335 are head domain (RuvB-H). Residues R309 and R314 each coordinate DNA.

It belongs to the RuvB family. As to quaternary structure, homohexamer. Forms an RuvA(8)-RuvB(12)-Holliday junction (HJ) complex. HJ DNA is sandwiched between 2 RuvA tetramers; dsDNA enters through RuvA and exits via RuvB. An RuvB hexamer assembles on each DNA strand where it exits the tetramer. Each RuvB hexamer is contacted by two RuvA subunits (via domain III) on 2 adjacent RuvB subunits; this complex drives branch migration. In the full resolvosome a probable DNA-RuvA(4)-RuvB(12)-RuvC(2) complex forms which resolves the HJ.

The protein resides in the cytoplasm. The enzyme catalyses ATP + H2O = ADP + phosphate + H(+). In terms of biological role, the RuvA-RuvB-RuvC complex processes Holliday junction (HJ) DNA during genetic recombination and DNA repair, while the RuvA-RuvB complex plays an important role in the rescue of blocked DNA replication forks via replication fork reversal (RFR). RuvA specifically binds to HJ cruciform DNA, conferring on it an open structure. The RuvB hexamer acts as an ATP-dependent pump, pulling dsDNA into and through the RuvAB complex. RuvB forms 2 homohexamers on either side of HJ DNA bound by 1 or 2 RuvA tetramers; 4 subunits per hexamer contact DNA at a time. Coordinated motions by a converter formed by DNA-disengaged RuvB subunits stimulates ATP hydrolysis and nucleotide exchange. Immobilization of the converter enables RuvB to convert the ATP-contained energy into a lever motion, pulling 2 nucleotides of DNA out of the RuvA tetramer per ATP hydrolyzed, thus driving DNA branch migration. The RuvB motors rotate together with the DNA substrate, which together with the progressing nucleotide cycle form the mechanistic basis for DNA recombination by continuous HJ branch migration. Branch migration allows RuvC to scan DNA until it finds its consensus sequence, where it cleaves and resolves cruciform DNA. In Wolinella succinogenes (strain ATCC 29543 / DSM 1740 / CCUG 13145 / JCM 31913 / LMG 7466 / NCTC 11488 / FDC 602W) (Vibrio succinogenes), this protein is Holliday junction branch migration complex subunit RuvB.